A 244-amino-acid chain; its full sequence is Proteasome assembly chaperone 2 (244 aa).

This sequence belongs to the PSMG2 family. Forms a heterodimer with psmg1.

Its subcellular location is the nucleus. Chaperone protein which promotes assembly of the 20S proteasome as part of a heterodimer with psmg1. The protein is Proteasome assembly chaperone 2 (psmg2) of Nematostella vectensis (Starlet sea anemone).